We begin with the raw amino-acid sequence, 404 residues long: Argininosuccinate synthase (404 aa).

Residues 10-18 and alanine 38 each bind ATP; that span reads AYSGGVDTS. Tyrosine 89 is an L-citrulline binding site. Residue glycine 119 participates in ATP binding. L-aspartate contacts are provided by threonine 121, asparagine 125, and aspartate 126. Residue asparagine 125 coordinates L-citrulline. Positions 129, 177, 186, 262, and 274 each coordinate L-citrulline.

The protein belongs to the argininosuccinate synthase family. Type 1 subfamily. In terms of assembly, homotetramer.

It is found in the cytoplasm. It carries out the reaction L-citrulline + L-aspartate + ATP = 2-(N(omega)-L-arginino)succinate + AMP + diphosphate + H(+). It functions in the pathway amino-acid biosynthesis; L-arginine biosynthesis; L-arginine from L-ornithine and carbamoyl phosphate: step 2/3. The sequence is that of Argininosuccinate synthase from Prochlorococcus marinus (strain MIT 9215).